The chain runs to 118 residues: Mitochondrial zinc maintenance protein 1, mitochondrial (118 aa).

The segment at 70–118 is disordered; sequence QGQKHNPDEEKYQLNLHKDSEMGDNESIKSPPPMPTKGKKGKKVKCCSE. Residues 74-90 show a composition bias toward basic and acidic residues; the sequence is HNPDEEKYQLNLHKDSE. Over residues 106–118 the composition is skewed to basic residues; it reads KGKKGKKVKCCSE.

This sequence belongs to the complex I LYR family. MZM1 subfamily. As to quaternary structure, interacts with RIP1.

Its subcellular location is the mitochondrion matrix. Assembly factor required for Rieske Fe-S protein RIP1 incorporation into the cytochrome b-c1 (CIII) complex. Functions as a chaperone, binding to this subunit within the mitochondrial matrix and stabilizing it prior to its translocation and insertion into the late CIII dimeric intermediate within the mitochondrial inner membrane. Modulates the mitochondrial matrix zinc pool. The protein is Mitochondrial zinc maintenance protein 1, mitochondrial (MZM1) of Yarrowia lipolytica (strain CLIB 122 / E 150) (Yeast).